A 514-amino-acid polypeptide reads, in one-letter code: Adenylosuccinate synthetase 1, chloroplastic (514 aa).

The N-terminal 73 residues, 1 to 73, are a transit peptide targeting the chloroplast; that stretch reads MAMAAAAAVA…AQAIERESVK (73 aa). Residues 100 to 106 and 128 to 130 contribute to the GTP site; these read GDEGKGK and GHT. Aspartate 101 functions as the Proton acceptor in the catalytic mechanism. Aspartate 101 and glycine 128 together coordinate Mg(2+). Residues 101–104, 126–129, threonine 218, arginine 232, glutamine 312, threonine 327, and arginine 391 each bind IMP; these read DEGK and NAGH. Histidine 129 (proton donor) is an active-site residue. Position 387–393 (387–393) interacts with substrate; it reads TTTGRPR. GTP-binding positions include arginine 393, 419-421, and 502-504; these read KLD and GVG.

The protein belongs to the adenylosuccinate synthetase family. Homodimer. It depends on Mg(2+) as a cofactor.

It localises to the plastid. It is found in the chloroplast. It carries out the reaction IMP + L-aspartate + GTP = N(6)-(1,2-dicarboxyethyl)-AMP + GDP + phosphate + 2 H(+). Its pathway is purine metabolism; AMP biosynthesis via de novo pathway; AMP from IMP: step 1/2. Plays an important role in the de novo pathway and in the salvage pathway of purine nucleotide biosynthesis. Catalyzes the first committed step in the biosynthesis of AMP from IMP. The polypeptide is Adenylosuccinate synthetase 1, chloroplastic (Physcomitrium patens (Spreading-leaved earth moss)).